A 294-amino-acid chain; its full sequence is MLKGAVTALITPFDDNGAIDEKAFCNFVEWQITQGINGVSPVGTTGESPTLTHEEHKRIIELCVEQVAKRVPVVAGAGSNSTSEAVELAKHAEKAGADAVLVVTPYYNRPNQRGLYTHFSSIAKAISIPIIIYNIPSRSVIDMAVETMRDLCRDFKNIIGVKDATGKIERASEQREKCGKDFVQLSGDDCTALGFNAHGGVGCISVSSNVAPKLCAQLHAACLCSDYKTALKLNDLLMPLNRAVFIEPSPAGIKYAAAKLGLCGTIVRSPIVPLSDTTKKIIDEALYHAGLLKE.

Pyruvate is bound at residue Thr-45. The Proton donor/acceptor role is filled by Tyr-133. The active-site Schiff-base intermediate with substrate is the Lys-162. Ile-204 provides a ligand contact to pyruvate.

The protein belongs to the DapA family. Homotetramer; dimer of dimers.

It localises to the cytoplasm. It catalyses the reaction L-aspartate 4-semialdehyde + pyruvate = (2S,4S)-4-hydroxy-2,3,4,5-tetrahydrodipicolinate + H2O + H(+). It participates in amino-acid biosynthesis; L-lysine biosynthesis via DAP pathway; (S)-tetrahydrodipicolinate from L-aspartate: step 3/4. Its function is as follows. Catalyzes the condensation of (S)-aspartate-beta-semialdehyde [(S)-ASA] and pyruvate to 4-hydroxy-tetrahydrodipicolinate (HTPA). In Bartonella henselae (strain ATCC 49882 / DSM 28221 / CCUG 30454 / Houston 1) (Rochalimaea henselae), this protein is 4-hydroxy-tetrahydrodipicolinate synthase.